The sequence spans 48 residues: Large ribosomal subunit protein bL34 (48 aa).

This sequence belongs to the bacterial ribosomal protein bL34 family.

The polypeptide is Large ribosomal subunit protein bL34 (rpmH) (Mycoplasma genitalium (strain ATCC 33530 / DSM 19775 / NCTC 10195 / G37) (Mycoplasmoides genitalium)).